The chain runs to 647 residues: Threonine--tRNA ligase (647 aa).

Residues 1 to 61 (MIKITFPDGA…EEDGSIEIVT (61 aa)) enclose the TGS domain. The interval 240–538 (DHRKLGKELD…LIETYKGAFP (299 aa)) is catalytic. The Zn(2+) site is built by cysteine 334, histidine 385, and histidine 515.

Belongs to the class-II aminoacyl-tRNA synthetase family. In terms of assembly, homodimer. Requires Zn(2+) as cofactor.

The protein localises to the cytoplasm. The enzyme catalyses tRNA(Thr) + L-threonine + ATP = L-threonyl-tRNA(Thr) + AMP + diphosphate + H(+). Functionally, catalyzes the attachment of threonine to tRNA(Thr) in a two-step reaction: L-threonine is first activated by ATP to form Thr-AMP and then transferred to the acceptor end of tRNA(Thr). Also edits incorrectly charged L-seryl-tRNA(Thr). This Streptococcus pyogenes serotype M6 (strain ATCC BAA-946 / MGAS10394) protein is Threonine--tRNA ligase.